A 268-amino-acid chain; its full sequence is Tryptophan synthase alpha chain (268 aa).

Catalysis depends on proton acceptor residues Glu49 and Asp60.

It belongs to the TrpA family. In terms of assembly, tetramer of two alpha and two beta chains.

It carries out the reaction (1S,2R)-1-C-(indol-3-yl)glycerol 3-phosphate + L-serine = D-glyceraldehyde 3-phosphate + L-tryptophan + H2O. It participates in amino-acid biosynthesis; L-tryptophan biosynthesis; L-tryptophan from chorismate: step 5/5. In terms of biological role, the alpha subunit is responsible for the aldol cleavage of indoleglycerol phosphate to indole and glyceraldehyde 3-phosphate. This Shigella boydii serotype 18 (strain CDC 3083-94 / BS512) protein is Tryptophan synthase alpha chain.